Consider the following 336-residue polypeptide: Secreted effector protein SifA (336 aa).

An interaction with host PLEKHM2 region spans residues 1–330; sequence MPITIGNGFL…LHVRSEQQSG (330 aa).

Belongs to the Sif family. Interacts with host PLEKHM2. Interacts with SseJ; the interaction is indirect.

It is found in the secreted. The protein resides in the host cytoplasm. It localises to the host cell membrane. Its function is as follows. Effector proteins function to alter host cell physiology and promote bacterial survival in host tissues. This protein is required for endosomal tubulation and formation of Salmonella-induced filaments (Sifs), which are filamentous structures containing lysosomal membrane glycoproteins within epithelial cells. Sif formation is concomitant with intracellular bacterial replication. The polypeptide is Secreted effector protein SifA (sifA) (Salmonella typhimurium (strain LT2 / SGSC1412 / ATCC 700720)).